The primary structure comprises 353 residues: Chorismate synthase (353 aa).

The NADP(+) site is built by R48 and R54. Residues 125–127 (RSS), 238–239 (NA), G278, 293–297 (KPTSS), and R319 each bind FMN.

It belongs to the chorismate synthase family. As to quaternary structure, homotetramer. It depends on FMNH2 as a cofactor.

The catalysed reaction is 5-O-(1-carboxyvinyl)-3-phosphoshikimate = chorismate + phosphate. The protein operates within metabolic intermediate biosynthesis; chorismate biosynthesis; chorismate from D-erythrose 4-phosphate and phosphoenolpyruvate: step 7/7. In terms of biological role, catalyzes the anti-1,4-elimination of the C-3 phosphate and the C-6 proR hydrogen from 5-enolpyruvylshikimate-3-phosphate (EPSP) to yield chorismate, which is the branch point compound that serves as the starting substrate for the three terminal pathways of aromatic amino acid biosynthesis. This reaction introduces a second double bond into the aromatic ring system. In Bordetella parapertussis (strain 12822 / ATCC BAA-587 / NCTC 13253), this protein is Chorismate synthase.